The sequence spans 361 residues: MILGHAARSLREHGTIRSVTLQDSAFLRACRRQPVPHTPVWFMRQAGRSLPEYRKLREGVPMLEACARPDMIVEITLQPVRRYNVDAAIFFSDIMVPLKAIGVDLDIKPGVGPVVAEPIRDLAATRRLRGLEPDDVPYVTEAIRELVRELGSRPLIGFAGGPFTLASYLIEGGPSRHHEHTKALMYGAPEVWTELMRRLSAITLEFLRVQIAAGASAVQLFDSWVGALSAEDYRANVLPYSSWIFAQLAEFDVPRIHFGVGTGELLGLLSEAGADVVGVDWRVPLDQAARRVRPHTALQGNLDPAVLFAPWSVVAERTDDVLARAKAAEGHVFNLGHGVLPTTDPAVLERLVEYVHTQTAN.

Residues 44-48 (RQAGR), Asp-93, Tyr-168, Ser-223, and His-337 contribute to the substrate site.

Belongs to the uroporphyrinogen decarboxylase family. In terms of assembly, homodimer.

It localises to the cytoplasm. The enzyme catalyses uroporphyrinogen III + 4 H(+) = coproporphyrinogen III + 4 CO2. It functions in the pathway porphyrin-containing compound metabolism; protoporphyrin-IX biosynthesis; coproporphyrinogen-III from 5-aminolevulinate: step 4/4. In terms of biological role, catalyzes the decarboxylation of four acetate groups of uroporphyrinogen-III to yield coproporphyrinogen-III. This chain is Uroporphyrinogen decarboxylase, found in Thermobifida fusca (strain YX).